The chain runs to 701 residues: Protein mono-ADP-ribosyltransferase PARP12 (701 aa).

3 consecutive C3H1-type zinc fingers follow at residues 94-119 (LCRF…HSLT), 150-179 (WLLP…IKLH), and 180-202 (ICQY…HDFS). Positions 234-268 (KNKSSAPSRVPPLFVPQGTSERKDSSGSVSPNTLS) are disordered. A Phosphoserine modification is found at serine 258. Residues 259-268 (SGSVSPNTLS) show a composition bias toward polar residues. 2 consecutive C3H1-type zinc fingers follow at residues 270–297 (EEGD…HFHL) and 271–296 (EGDQ…VHFH). WWE domains are found at residues 298–361 (PYRW…RLST) and 364–458 (SVTK…KVCR). Cysteine 474 is modified (ADP-ribosylcysteine). The 215-residue stretch at 484 to 698 (IPDYWDSSAL…ILLALGSLFS (215 aa)) folds into the PARP catalytic domain. ADP-ribosyl aspartic acid is present on residues aspartate 600 and aspartate 611.

It belongs to the ARTD/PARP family. As to quaternary structure, interacts with PARP11; this interaction plays a key role in zika virus suppression. Interacts with ISG15. In terms of processing, auto-mono-ADP-ribosylated. Post-translationally, phosphorylated by PRKD1.

Its subcellular location is the nucleus. The protein resides in the golgi apparatus. It is found in the trans-Golgi network. It localises to the cytoplasm. The protein localises to the stress granule. It carries out the reaction L-aspartyl-[protein] + NAD(+) = 4-O-(ADP-D-ribosyl)-L-aspartyl-[protein] + nicotinamide. It catalyses the reaction L-cysteinyl-[protein] + NAD(+) = S-(ADP-D-ribosyl)-L-cysteinyl-[protein] + nicotinamide + H(+). Functionally, mono-ADP-ribosyltransferase that mediates mono-ADP-ribosylation of target proteins. Acts as an antiviral factor by cooperating with PARP11 to suppress Zika virus replication. Displays anti-alphavirus activity during IFN-gamma immune activation by directly ADP-ribosylating the alphaviral non-structural proteins nsP3 and nsP4. Acts as a component of the PRKD1-driven regulatory cascade that selectively controls a major branch of the basolateral transport pathway by catalyzing the MARylation of GOLGA1. Acts also as a key regulator of mitochondrial function, protein translation, and inflammation. Inhibits PINK1/Parkin-dependent mitophagy and promotes cartilage degeneration by inhibiting the ubiquitination and SUMOylation of MFN1/2 by upregulating ISG15 and ISGylation. The protein is Protein mono-ADP-ribosyltransferase PARP12 of Homo sapiens (Human).